Here is a 227-residue protein sequence, read N- to C-terminus: Cytochrome c oxidase subunit 2 (227 aa).

Residues 1–14 (MAYPFQLGLQDATS) lie on the Mitochondrial intermembrane side of the membrane. A helical membrane pass occupies residues 15-45 (PIMEELTNFHDHTLMIVFLISTLVLYIISLM). Topologically, residues 46 to 59 (LTTKLTHTSTMDAQ) are mitochondrial matrix. The chain crosses the membrane as a helical span at residues 60–87 (EVETIWTILPAVILILIALPSLRILYMM). The Mitochondrial intermembrane segment spans residues 88-227 (DEINNPALTV…YFEDWSASMI (140 aa)). The Cu cation site is built by histidine 161, cysteine 196, glutamate 198, cysteine 200, histidine 204, and methionine 207. Glutamate 198 is a binding site for Mg(2+). The residue at position 218 (tyrosine 218) is a Phosphotyrosine.

The protein belongs to the cytochrome c oxidase subunit 2 family. In terms of assembly, component of the cytochrome c oxidase (complex IV, CIV), a multisubunit enzyme composed of 14 subunits. The complex is composed of a catalytic core of 3 subunits MT-CO1, MT-CO2 and MT-CO3, encoded in the mitochondrial DNA, and 11 supernumerary subunits COX4I, COX5A, COX5B, COX6A, COX6B, COX6C, COX7A, COX7B, COX7C, COX8 and NDUFA4, which are encoded in the nuclear genome. The complex exists as a monomer or a dimer and forms supercomplexes (SCs) in the inner mitochondrial membrane with NADH-ubiquinone oxidoreductase (complex I, CI) and ubiquinol-cytochrome c oxidoreductase (cytochrome b-c1 complex, complex III, CIII), resulting in different assemblies (supercomplex SCI(1)III(2)IV(1) and megacomplex MCI(2)III(2)IV(2)). Found in a complex with TMEM177, COA6, COX18, COX20, SCO1 and SCO2. Interacts with TMEM177 in a COX20-dependent manner. Interacts with COX20. Interacts with COX16. Cu cation serves as cofactor.

It localises to the mitochondrion inner membrane. It carries out the reaction 4 Fe(II)-[cytochrome c] + O2 + 8 H(+)(in) = 4 Fe(III)-[cytochrome c] + 2 H2O + 4 H(+)(out). Its function is as follows. Component of the cytochrome c oxidase, the last enzyme in the mitochondrial electron transport chain which drives oxidative phosphorylation. The respiratory chain contains 3 multisubunit complexes succinate dehydrogenase (complex II, CII), ubiquinol-cytochrome c oxidoreductase (cytochrome b-c1 complex, complex III, CIII) and cytochrome c oxidase (complex IV, CIV), that cooperate to transfer electrons derived from NADH and succinate to molecular oxygen, creating an electrochemical gradient over the inner membrane that drives transmembrane transport and the ATP synthase. Cytochrome c oxidase is the component of the respiratory chain that catalyzes the reduction of oxygen to water. Electrons originating from reduced cytochrome c in the intermembrane space (IMS) are transferred via the dinuclear copper A center (CU(A)) of subunit 2 and heme A of subunit 1 to the active site in subunit 1, a binuclear center (BNC) formed by heme A3 and copper B (CU(B)). The BNC reduces molecular oxygen to 2 water molecules using 4 electrons from cytochrome c in the IMS and 4 protons from the mitochondrial matrix. In Hybomys univittatus (Peter's striped mouse), this protein is Cytochrome c oxidase subunit 2 (MT-CO2).